Reading from the N-terminus, the 137-residue chain is Glutaredoxin-C9 (137 aa).

Residues 32–136 (GERVRMVVEE…PILKEVGALW (105 aa)) form the Glutaredoxin domain. C52 and C55 are oxidised to a cystine. The Responsive for interaction with TGA factors motif lies at 134–137 (ALWL).

This sequence belongs to the glutaredoxin family. CC-type subfamily. As to quaternary structure, interacts with TGA2 and TGA6.

The protein resides in the cytoplasm. The protein localises to the nucleus. Its function is as follows. Has a glutathione-disulfide oxidoreductase activity in the presence of NADPH and glutathione reductase. Reduces low molecular weight disulfides and proteins. The polypeptide is Glutaredoxin-C9 (GRXC9) (Arabidopsis thaliana (Mouse-ear cress)).